Consider the following 313-residue polypeptide: Ribosomal RNA small subunit methyltransferase H (313 aa).

S-adenosyl-L-methionine-binding positions include 35–37, Asp55, Phe79, Asp100, and Gln107; that span reads GGH.

The protein belongs to the methyltransferase superfamily. RsmH family.

Its subcellular location is the cytoplasm. The catalysed reaction is cytidine(1402) in 16S rRNA + S-adenosyl-L-methionine = N(4)-methylcytidine(1402) in 16S rRNA + S-adenosyl-L-homocysteine + H(+). Specifically methylates the N4 position of cytidine in position 1402 (C1402) of 16S rRNA. This chain is Ribosomal RNA small subunit methyltransferase H, found in Burkholderia orbicola (strain MC0-3).